A 144-amino-acid chain; its full sequence is D-aminoacyl-tRNA deacylase (144 aa).

Positions 136–137 (GP) match the Gly-cisPro motif, important for rejection of L-amino acids motif.

It belongs to the DTD family. As to quaternary structure, homodimer.

It is found in the cytoplasm. The catalysed reaction is glycyl-tRNA(Ala) + H2O = tRNA(Ala) + glycine + H(+). It carries out the reaction a D-aminoacyl-tRNA + H2O = a tRNA + a D-alpha-amino acid + H(+). Its function is as follows. An aminoacyl-tRNA editing enzyme that deacylates mischarged D-aminoacyl-tRNAs. Also deacylates mischarged glycyl-tRNA(Ala), protecting cells against glycine mischarging by AlaRS. Acts via tRNA-based rather than protein-based catalysis; rejects L-amino acids rather than detecting D-amino acids in the active site. By recycling D-aminoacyl-tRNA to D-amino acids and free tRNA molecules, this enzyme counteracts the toxicity associated with the formation of D-aminoacyl-tRNA entities in vivo and helps enforce protein L-homochirality. The protein is D-aminoacyl-tRNA deacylase of Vibrio parahaemolyticus serotype O3:K6 (strain RIMD 2210633).